Here is a 482-residue protein sequence, read N- to C-terminus: 23S rRNA (uracil(1939)-C(5))-methyltransferase RlmD (482 aa).

The segment at 1–33 is disordered; it reads MANLFKQSRAKQKNKTTPSQTQTSTKGSARANA. A compositionally biased stretch (low complexity) spans 15–28; sequence KTTPSQTQTSTKGS. The region spanning 51–108 is the TRAM domain; that stretch reads TAQDANNNAITIQELDWMGQGVARGATMYFVEGALPGETCDIEVVSSKKKVVSAKTIS. Positions 121, 127, 130, and 208 each coordinate [4Fe-4S] cluster. Residues Q313, F342, N347, E363, D390, and D411 each contribute to the S-adenosyl-L-methionine site. The active-site Nucleophile is the C437.

The protein belongs to the class I-like SAM-binding methyltransferase superfamily. RNA M5U methyltransferase family. RlmD subfamily.

It catalyses the reaction uridine(1939) in 23S rRNA + S-adenosyl-L-methionine = 5-methyluridine(1939) in 23S rRNA + S-adenosyl-L-homocysteine + H(+). Functionally, catalyzes the formation of 5-methyl-uridine at position 1939 (m5U1939) in 23S rRNA. This chain is 23S rRNA (uracil(1939)-C(5))-methyltransferase RlmD, found in Alteromonas mediterranea (strain DSM 17117 / CIP 110805 / LMG 28347 / Deep ecotype).